A 259-amino-acid polypeptide reads, in one-letter code: tRNA pseudouridine synthase A (259 aa).

D51 functions as the Nucleophile in the catalytic mechanism. Y109 serves as a coordination point for substrate.

This sequence belongs to the tRNA pseudouridine synthase TruA family. Homodimer.

The enzyme catalyses uridine(38/39/40) in tRNA = pseudouridine(38/39/40) in tRNA. Formation of pseudouridine at positions 38, 39 and 40 in the anticodon stem and loop of transfer RNAs. The sequence is that of tRNA pseudouridine synthase A from Colwellia psychrerythraea (strain 34H / ATCC BAA-681) (Vibrio psychroerythus).